Consider the following 179-residue polypeptide: Cell division protein SepF (179 aa).

Residues 22–53 (LPYEKRDEPVFTPVNSSQEPALPMNQPSQSVG) are disordered. Residues 34 to 53 (PVNSSQEPALPMNQPSQSVG) show a composition bias toward polar residues.

This sequence belongs to the SepF family. As to quaternary structure, homodimer. Interacts with FtsZ.

It localises to the cytoplasm. Its function is as follows. Cell division protein that is part of the divisome complex and is recruited early to the Z-ring. Probably stimulates Z-ring formation, perhaps through the cross-linking of FtsZ protofilaments. Its function overlaps with FtsA. In Streptococcus pneumoniae (strain P1031), this protein is Cell division protein SepF.